The following is an 889-amino-acid chain: MKLDIKKTFSNRSDRVKGIDFHPTEPWVLTTLYSGRVELWNYETQVEVRSIQVTETPVRAGKFIARKNWIIVGSDDFRIRVFNYNTGEKVVDFEAHPDYIRSIAVHPTKPYVLSGSDDLTVKLWNWENNWALEQTFEGHEHFVMCVAFNPKDPSTFASGCLDRTVKVWSLGQSTPNFTLTTGQERGVNYVDYYPLPDKPYMITASDDLTIKIWDYQTKSCVATLEGHMSNVSFAVFHPTLPIIISGSEDGTLKIWNSSTYKVEKTLNVGLERSWCIATHPTGRKNYIASGFDNGFTVLSLGNDEPTLSLDPVGKLVWSGGKNAAASDIFTAVIRGNEEVEQDEPLSLQTKELGSVDVFPQSLAHSPNGRFVTVVGDGEYVIYTALAWRNKAFGKCQDFVWGPDSNSYALIDETGQIKYYKNFKEVTSWSVPMHSAIDRLFSGALLGVKSDGFVYFFDWDNGTLVRRIDVNAKDVIWSDNGELVMIVNTNSNGDEASGYTLLFNKDAYLEAANNGNIDDSEGVDEAFDVLYELSESITSGKWVGDVFIFTTATNRLNYFVGGKTYNLAHYTKEMYLLGYLARDNKVYLADREVHVYGYEISLEVLEFQTLTLRGEIEEAIENVLPNVEGKDSLTKIARFLEGQEYYEEALNISPDQDQKFELALKVGQLTLARDLLTDESAEMKWRALGDASLQRFNFKLAVEAFTNAHDLESLFLLHSSFNNKEGLVTLAKDAERAGKFNLAFNAYWIAGDIQGAKDLLIKSQRFSEAAFLGSTYGLGDDAVNDIVTKWKENLILNGKNTVSERVCGAEGLPGSSSSGDAQPLIDLDSTPAPEQADENKEAEVEDSEFKESNSEAVEAEKKEEEAPQQQQSEQQPEQGEAVPEPVEEES.

6 WD repeats span residues 11–41 (NRSD…ELWN), 53–83 (VTET…RVFN), 95–125 (AHPD…KLWN), 138–169 (GHEH…KVWS), 182–214 (GQER…KIWD), and 226–256 (GHMS…KIWN). Phosphoserine is present on Ser326. The disordered stretch occupies residues 806–889 (CGAEGLPGSS…AVPEPVEEES (84 aa)). Residues 836–864 (DENKEAEVEDSEFKESNSEAVEAEKKEEE) are compositionally biased toward basic and acidic residues. Low complexity predominate over residues 866 to 879 (PQQQQSEQQPEQGE).

Belongs to the WD repeat COPB2 family. As to quaternary structure, oligomeric complex that consists of at least the alpha, beta, beta', gamma, delta, epsilon and zeta subunits. Interacts with the ESCRT-0 subunit VPS27.

It localises to the cytoplasm. It is found in the golgi apparatus membrane. Its subcellular location is the cytoplasmic vesicle. The protein localises to the COPI-coated vesicle membrane. Its function is as follows. The coatomer is a cytosolic protein complex that binds to dilysine motifs and reversibly associates with Golgi non-clathrin-coated vesicles, which further mediate biosynthetic protein transport from the ER, via the Golgi up to the trans Golgi network. Coatomer complex is required for budding from Golgi membranes, and is essential for the retrograde Golgi-to-ER transport of dilysine-tagged proteins. The protein is Coatomer subunit beta' (SEC27) of Saccharomyces cerevisiae (strain ATCC 204508 / S288c) (Baker's yeast).